The sequence spans 397 residues: MNIHEYQAKALLREFGVPVSRGVPVLKASEAEAAAETLGGPVWVVKSQIHAGGRGKGKFKEASAGDKGGVRLAKSIDEVKQFASQMLGATLVTVQTGPAGKQVNRLYIEEGSDIDKEFYLSALVDRETSRVAFVVSTEGGVNIEDVAHTSPEKIVSFSVDPATGVMSHHGRTVAKALGLRGDLGKQAEKLVAQLYNAFIAKDMALLEINPLVVTRQGELRVLDAKVSFDDNALYRHPDAVALRDESEEDAKEIEASRFDLSYVALDGQIGCMVNGAGLAMATMDIIKLYGMSPANFLDVGGGATKDKVAAAFKIITADPNVKGILVNIFGGIMKCDVIAEGVVAAVKQVGLNVPLVVRLEGTNVDAGKKIIRESGLNVLPADDLDDAAQKIVKAVKG.

The ATP-grasp domain maps to 9–254 (KALLREFGVP…ESEEDAKEIE (246 aa)). ATP-binding positions include Lys46, 53-55 (GRG), Glu109, Ser112, and Glu117. Residues Asn209 and Asp223 each coordinate Mg(2+). Substrate contacts are provided by residues Asn274 and 331 to 333 (GIM).

This sequence belongs to the succinate/malate CoA ligase beta subunit family. Heterotetramer of two alpha and two beta subunits. It depends on Mg(2+) as a cofactor.

It carries out the reaction succinate + ATP + CoA = succinyl-CoA + ADP + phosphate. It catalyses the reaction GTP + succinate + CoA = succinyl-CoA + GDP + phosphate. It participates in carbohydrate metabolism; tricarboxylic acid cycle; succinate from succinyl-CoA (ligase route): step 1/1. In terms of biological role, succinyl-CoA synthetase functions in the citric acid cycle (TCA), coupling the hydrolysis of succinyl-CoA to the synthesis of either ATP or GTP and thus represents the only step of substrate-level phosphorylation in the TCA. The beta subunit provides nucleotide specificity of the enzyme and binds the substrate succinate, while the binding sites for coenzyme A and phosphate are found in the alpha subunit. This is Succinate--CoA ligase [ADP-forming] subunit beta from Nitrobacter hamburgensis (strain DSM 10229 / NCIMB 13809 / X14).